Reading from the N-terminus, the 536-residue chain is Bifunctional purine biosynthesis protein PurH (536 aa).

In terms of domain architecture, MGS-like spans 8–158; sequence IPAPDEVRIK…KNHAYVTVVT (151 aa).

This sequence belongs to the PurH family.

It carries out the reaction (6R)-10-formyltetrahydrofolate + 5-amino-1-(5-phospho-beta-D-ribosyl)imidazole-4-carboxamide = 5-formamido-1-(5-phospho-D-ribosyl)imidazole-4-carboxamide + (6S)-5,6,7,8-tetrahydrofolate. It catalyses the reaction IMP + H2O = 5-formamido-1-(5-phospho-D-ribosyl)imidazole-4-carboxamide. It participates in purine metabolism; IMP biosynthesis via de novo pathway; 5-formamido-1-(5-phospho-D-ribosyl)imidazole-4-carboxamide from 5-amino-1-(5-phospho-D-ribosyl)imidazole-4-carboxamide (10-formyl THF route): step 1/1. Its pathway is purine metabolism; IMP biosynthesis via de novo pathway; IMP from 5-formamido-1-(5-phospho-D-ribosyl)imidazole-4-carboxamide: step 1/1. The polypeptide is Bifunctional purine biosynthesis protein PurH (Sinorhizobium medicae (strain WSM419) (Ensifer medicae)).